Here is a 479-residue protein sequence, read N- to C-terminus: D-hydantoinase/dihydropyrimidinase (479 aa).

Zn(2+) contacts are provided by His-59, His-61, and Lys-150. Lys-150 carries the post-translational modification N6-carboxylysine. Tyr-155 lines the substrate pocket. Zn(2+) contacts are provided by His-183 and His-239. Substrate is bound at residue Ser-289. Asp-316 contributes to the Zn(2+) binding site. Residue Asn-337 participates in substrate binding.

The protein belongs to the metallo-dependent hydrolases superfamily. Hydantoinase/dihydropyrimidinase family. As to quaternary structure, homotetramer. Zn(2+) serves as cofactor. Post-translationally, carboxylation allows a single lysine to coordinate two zinc ions.

It carries out the reaction 5,6-dihydrouracil + H2O = 3-(carbamoylamino)propanoate + H(+). Catalyzes the hydrolysis of dihydropyrimidines and of the structurally related DL-5-mono-substituted hydantoins, to produce N-carbamoyl-D-amino acids. The polypeptide is D-hydantoinase/dihydropyrimidinase (dht) (Pseudomonas aeruginosa (strain ATCC 15692 / DSM 22644 / CIP 104116 / JCM 14847 / LMG 12228 / 1C / PRS 101 / PAO1)).